Reading from the N-terminus, the 472-residue chain is FAD-linked oxidoreductase azaL (472 aa).

The first 18 residues, 1-18 (MFRTILLCSLGLTTLSSA), serve as a signal peptide directing secretion. N-linked (GlcNAc...) asparagine glycans are attached at residues Asn22, Asn44, Asn102, Asn123, Asn227, Asn246, Asn273, Asn305, Asn318, Asn390, and Asn415. An FAD-binding PCMH-type domain is found at 54 to 228 (TTYDAPTYIG…TSATYKIYNA (175 aa)).

The protein belongs to the oxygen-dependent FAD-linked oxidoreductase family.

The protein operates within secondary metabolite biosynthesis. Its function is as follows. FAD-linked oxidoreductase; part of the gene cluster that mediates the biosynthesis of azaphilones, a class of fungal metabolites characterized by a highly oxygenated pyrano-quinone bicyclic core and exhibiting a broad range of bioactivities. In the first step, the non-reducing polyketide synthase azaA forms the hexaketide precursor from successive condensations of five malonyl-CoA units, presumably with a simple acetyl-CoA starter unit. The reactive polyketide chain then undergoes a PT-mediated C2-C7 cyclization to afford the aromatic ring and is eventually released as an aldehyde through the R-domain. The putative ketoreductase azaE is proposed to catalyze the reduction of the terminal ketone resulting in the early culture product FK17-P2a. The monooxygenase azaH was demonstrated to be the only enzyme required to convert FK17-P2a to azanigerone E. AzaH first hydroxylates the benzaldehyde intermediate FK17-P2a at C4, which triggers the formation of the pyran-ring to afford azanigerone E. In parallel, the 2,4-dimethylhexanoyl chain is synthesized by the HR-PKS azaB and is proposed to be transferred to the C4-hydroxyl of azanigerone E by the acyltransferase azaD directly from the ACP domain of azaB. Alternatively, the 2,4-dimethyl-hexanoyl chain may be offloaded from the HR-PKS as a carboxylic acid and converted to an acyl-CoA by azaF. The resulting acyl-CoA molecule could then be taken up as a substrate by AzaD to form azanigerone B. To yield the carboxylic acid substituent in azanigerone A, the hydroxypropyl side chain of azanigerone B would need to undergo a C-C oxidative cleavage catalyzed by cytochrome P450 AzaI. AzaI is proposed to act on a vicinal diol that leads to a C-C bond scission either through an alkoxyradical intermediate or a peroxy complex. In the biosynthesis of azanigerone A, azanigerone B first undergoes hydroxylation at C10, possibly catalyzed by one of the two FAD-dependent monooxygenases encoded in the cluster, azaG or azaL, resulting in the vicinal diol azanigerone C. Oxidative cleavage of azanigerone C by azaI would yield the corresponding aldehyde derivative of azanigerone A. Finally, the dehydrogenase azaJ is proposed to convert the aldehyde functional group into the carboxylic acid, completing the conversion from azanigerone B to azanigerone A. Alternatively, the oxidation of aldehyde to carboxylic acid may be catalyzed by the same P450 enzyme azaI via consecutive oxidation or by endogenous alcohol dehydrogenase. In Aspergillus niger (strain ATCC 1015 / CBS 113.46 / FGSC A1144 / LSHB Ac4 / NCTC 3858a / NRRL 328 / USDA 3528.7), this protein is FAD-linked oxidoreductase azaL.